A 701-amino-acid polypeptide reads, in one-letter code: Rab-like protein 6 (701 aa).

Residue Met-1 is modified to N-acetylmethionine. The small GTPase-like stretch occupies residues 39-279 (GVQYNMKIVI…IFLEMMEARS (241 aa)). Residues 50–57 (GDRNTGKT), 100–104 (DVVDK), and 177–179 (YRD) contribute to the GTP site. The tract at residues 279–701 (SRGHASPLTT…LRGGGDYEAL (423 aa)) is disordered. The segment covering 284–315 (SPLTTSGQSPSSGSQSPVVPPSTVSTGSSSPS) has biased composition (low complexity). Positions 316-344 (TPQPVLQPPLQAPPAPPAPAEAPPLPAAP) are enriched in pro residues. 5 positions are modified to phosphoserine: Ser-394, Ser-416, Ser-418, Ser-461, and Ser-462. A compositionally biased stretch (low complexity) spans 495-506 (ALGPPRDAAPRA). Residue Ser-552 is modified to Phosphoserine. The span at 555–569 (DAQRRAGEFPVREDL) shows a compositional bias: basic and acidic residues. The residue at position 570 (Ser-570) is a Phosphoserine. At Thr-573 the chain carries Phosphothreonine. Residues 580–589 (VQPPAPPKPL) show a composition bias toward pro residues. Basic and acidic residues predominate over residues 608 to 626 (EPGREDSSEQDKEGRPPAK). Residues Ser-614 and Ser-615 each carry the phosphoserine modification. Positions 629–667 (KKKKKKGREEEDKAAKKRSKHKKSRERADDKGRDERRRR) are interaction with CDKN2A. Over residues 643–653 (AKKRSKHKKSR) the composition is skewed to basic residues. The segment covering 654-665 (ERADDKGRDERR) has biased composition (basic and acidic residues). Over residues 683–701 (LGGGAPSGPLRGGGDYEAL) the composition is skewed to gly residues.

It belongs to the small GTPase superfamily. Rab family.

Its subcellular location is the nucleus. The protein localises to the cytoplasm. In terms of biological role, may enhance cellular proliferation. May reduce growth inhibitory activity of CDKN2A. In Bos taurus (Bovine), this protein is Rab-like protein 6 (RABL6).